Consider the following 505-residue polypeptide: AMP phosphorylase (505 aa).

AMP-binding positions include G169, S195–G200, and T204. D257 (proton donor) is an active-site residue. Positions 265 and 289 each coordinate AMP.

The protein belongs to the thymidine/pyrimidine-nucleoside phosphorylase family. Type 2 subfamily.

It carries out the reaction AMP + phosphate = alpha-D-ribose 1,5-bisphosphate + adenine. The enzyme catalyses CMP + phosphate = cytosine + alpha-D-ribose 1,5-bisphosphate. It catalyses the reaction UMP + phosphate = alpha-D-ribose 1,5-bisphosphate + uracil. Functionally, catalyzes the conversion of AMP and phosphate to adenine and ribose 1,5-bisphosphate (R15P). Exhibits phosphorylase activity toward CMP and UMP in addition to AMP. Functions in an archaeal AMP degradation pathway, together with R15P isomerase and RubisCO. The polypeptide is AMP phosphorylase (Methanocorpusculum labreanum (strain ATCC 43576 / DSM 4855 / Z)).